The following is a 211-amino-acid chain: SsrA-binding protein (211 aa).

Disordered stretches follow at residues 1–20 and 170–211; these read MHRR…PERS and RLRR…RHEN. Residues 177-187 show a composition bias toward polar residues; sequence QRNTQRSVTPR.

This sequence belongs to the SmpB family.

It is found in the cytoplasm. Functionally, required for rescue of stalled ribosomes mediated by trans-translation. Binds to transfer-messenger RNA (tmRNA), required for stable association of tmRNA with ribosomes. tmRNA and SmpB together mimic tRNA shape, replacing the anticodon stem-loop with SmpB. tmRNA is encoded by the ssrA gene; the 2 termini fold to resemble tRNA(Ala) and it encodes a 'tag peptide', a short internal open reading frame. During trans-translation Ala-aminoacylated tmRNA acts like a tRNA, entering the A-site of stalled ribosomes, displacing the stalled mRNA. The ribosome then switches to translate the ORF on the tmRNA; the nascent peptide is terminated with the 'tag peptide' encoded by the tmRNA and targeted for degradation. The ribosome is freed to recommence translation, which seems to be the essential function of trans-translation. The polypeptide is SsrA-binding protein (Tropheryma whipplei (strain TW08/27) (Whipple's bacillus)).